Consider the following 724-residue polypeptide: Aquaglyceroporin-4 (724 aa).

3 disordered regions span residues 1-167, 248-267, and 302-396; these read MADE…SIRR, INMA…NQAD, and AHGL…DLDG. At 1 to 434 the chain is on the cytoplasmic side; the sequence is MADEEIKPTS…VIRLRFREPL (434 aa). Polar residues predominate over residues 87-96; the sequence is LTGQVPQDND. A compositionally biased stretch (low complexity) spans 252 to 265; it reads QQQQQQQQQQPQNQ. Composition is skewed to polar residues over residues 307-325 and 360-370; these read SPTN…TAPS and PSQTSQNSQNE. A helical transmembrane segment spans residues 435 to 455; it reads AELLAVTCQLTLGFCADLVVV. The Extracellular segment spans residues 456–472; the sequence is TSGKNASPAGNEATTDW. Residues 473–493 form a helical membrane-spanning segment; sequence AWGLASMLGIYIAGGISGAHL. The NPA 1 motif lies at 494–496; that stretch reads NPA. The Cytoplasmic portion of the chain corresponds to 494–513; that stretch reads NPAISIMLWIYRGFPLRKVP. The helical transmembrane segment at 514–534 threads the bilayer; sequence MYVLAQILGAFIAALISFGLY. At 535-567 the chain is on the extracellular side; sequence QTNIVEYGGTDLKTSDTMGAFITYPRYPWINAS. Asn565 carries an N-linked (GlcNAc...) asparagine glycan. A helical membrane pass occupies residues 568–588; sequence TSFFTEFVGTAILAVAVLALG. Topologically, residues 589 to 595 are cytoplasmic; sequence DDMNAPP. Residues 596 to 616 form a helical membrane-spanning segment; sequence GAGMSAFILGLVITVLSMAFG. At 617-647 the chain is on the extracellular side; it reads YNTGAALNPSRDLGPRLALAALGYGKDLFTD. The NPA 2 motif lies at 624 to 626; sequence NPS. Residues 648 to 668 form a helical membrane-spanning segment; it reads VYWIWGNWCAPILGAIFGAFL. Residues 669 to 724 lie on the Cytoplasmic side of the membrane; it reads YDAAIFAGGESPVNYPRKRIKRAGHKWRKKWGVRLRKMKPAKKGEDEAYRRWKESQ.

This sequence belongs to the MIP/aquaporin (TC 1.A.8) family.

It localises to the membrane. The enzyme catalyses H2O(in) = H2O(out). The catalysed reaction is glycerol(in) = glycerol(out). In terms of biological role, water channel required to facilitate the transport of water across membranes. May play a role in the vegetative growth. In Botryotinia fuckeliana (strain B05.10) (Noble rot fungus), this protein is Aquaglyceroporin-4.